A 313-amino-acid chain; its full sequence is Minor outer capsid protein P9 (313 aa).

This sequence belongs to the phytoreovirus minor outer capsid protein P9 family.

It localises to the virion. The protein localises to the host cytoplasm. In terms of biological role, minor outer capsid protein. This Catharanthus roseus (Madagascar periwinkle) protein is Minor outer capsid protein P9.